Consider the following 208-residue polypeptide: Small ribosomal subunit protein uS4B (208 aa).

Positions 95–160 (KRLDNVVFRL…NQVYMAAKQA (66 aa)) constitute an S4 RNA-binding domain.

Belongs to the universal ribosomal protein uS4 family. Part of the 30S ribosomal subunit. Contacts protein S5. The interaction surface between S4 and S5 is involved in control of translational fidelity.

One of the primary rRNA binding proteins, it binds directly to 16S rRNA where it nucleates assembly of the body of the 30S subunit. Its function is as follows. With S5 and S12 plays an important role in translational accuracy. The chain is Small ribosomal subunit protein uS4B from Bdellovibrio bacteriovorus (strain ATCC 15356 / DSM 50701 / NCIMB 9529 / HD100).